We begin with the raw amino-acid sequence, 1126 residues long: Ubiquitin carboxyl-terminal hydrolase 16/45 (1126 aa).

A compositionally biased stretch (basic and acidic residues) spans 1-15 (MVKKRQADSRDHDCS). The segment at 1–44 (MVKKRQADSRDHDCSTDSGNEDLHHRKGLGSPGQSDGATPTTAS) is disordered. The segment covering 32–44 (PGQSDGATPTTAS) has biased composition (polar residues). A UBP-type zinc finger spans residues 43 to 181 (ASCQHIKKAV…ELVKKLAQKP (139 aa)). Zn(2+)-binding residues include cysteine 45, histidine 47, cysteine 70, cysteine 73, cysteine 111, cysteine 114, cysteine 119, histidine 126, histidine 130, histidine 139, cysteine 152, and cysteine 155. Low complexity-rich tracts occupy residues 215–229 (GGSF…SLAA) and 254–264 (SSGLSTSDSLT). The interval 215 to 264 (GGSFDDSSSRGSLAAAGGGGGVGSSRNRQVAIPMPPPEPSSGLSTSDSLT) is disordered. The Nucleophile role is filled by cysteine 315. Disordered stretches follow at residues 513 to 547 (KPQP…INTK), 570 to 762 (ASLG…SGSS), and 795 to 833 (EQGA…ARTK). A compositionally biased stretch (low complexity) spans 524 to 539 (PELSLTSSSSSVTPST). Over residues 586 to 598 (QRKAKRAAKKRQK) the composition is skewed to basic residues. 2 stretches are compositionally biased toward low complexity: residues 599 to 614 (SSLN…GNEL) and 646 to 657 (TEDSTTSSVTTS). Positions 674–701 (APSTNNVPSSTASLTAPSKTYMDSNGNA) are enriched in polar residues. The span at 705–718 (GEKRDDTPEHMDKD) shows a compositional bias: basic and acidic residues. The span at 730 to 762 (ATSPAPTATNSSTSTSATGNNNSVAGSGLSGSS) shows a compositional bias: low complexity. Residues 807–816 (GEAKAIEQPE) show a composition bias toward basic and acidic residues. Over residues 821-830 (QAQAMAQAQA) the composition is skewed to low complexity. The active-site Proton acceptor is the histidine 984. The tract at residues 1037–1089 (LKVLDDSDDFSNSSSNSSTSDESQTPATPLEEQQTQQAQQPQQPQQLEEAANV) is disordered. The span at 1046-1086 (FSNSSSNSSTSDESQTPATPLEEQQTQQAQQPQQPQQLEEA) shows a compositional bias: low complexity.

It belongs to the peptidase C19 family.

The enzyme catalyses Thiol-dependent hydrolysis of ester, thioester, amide, peptide and isopeptide bonds formed by the C-terminal Gly of ubiquitin (a 76-residue protein attached to proteins as an intracellular targeting signal).. Functionally, involved in the regulation of DNA damage repair. This chain is Ubiquitin carboxyl-terminal hydrolase 16/45, found in Drosophila melanogaster (Fruit fly).